We begin with the raw amino-acid sequence, 145 residues long: Deoxyuridine 5'-triphosphate nucleotidohydrolase (145 aa).

Substrate contacts are provided by residues 62–64 (RSG), Asn75, 79–81 (TVD), and Lys89.

This sequence belongs to the dUTPase family. Requires Mg(2+) as cofactor.

The catalysed reaction is dUTP + H2O = dUMP + diphosphate + H(+). Its pathway is pyrimidine metabolism; dUMP biosynthesis; dUMP from dCTP (dUTP route): step 2/2. In terms of biological role, this enzyme is involved in nucleotide metabolism: it produces dUMP, the immediate precursor of thymidine nucleotides and it decreases the intracellular concentration of dUTP so that uracil cannot be incorporated into DNA. This is Deoxyuridine 5'-triphosphate nucleotidohydrolase from Helicobacter pylori (strain P12).